The following is a 148-amino-acid chain: Hemoglobin subunit alpha (148 aa).

Position 1 is an N-acetylserine (Ser1). In terms of domain architecture, Globin spans 8–148 (DYSAADRAEL…VCHELSSRYR (141 aa)). Residue His66 participates in O2 binding. His95 contributes to the heme b binding site.

This sequence belongs to the globin family. As to quaternary structure, heterotetramer of two alpha chains and two beta chains. In terms of tissue distribution, red blood cells.

Involved in oxygen transport from the lung to the various peripheral tissues. In Heterodontus portusjacksoni (Port Jackson shark), this protein is Hemoglobin subunit alpha (HBA).